The primary structure comprises 120 residues: MDNIKFTPQDILHKQFKERNIGKGYDEADVDAFLDDVIKDYDTYNKELERLNDENERLRAKVDELNRQVEVGSSMSNQTASRQPVSSATNMDILKRLSNLERRVFGSQLDGNDNNDSHLL.

Residues 34–74 (LDDVIKDYDTYNKELERLNDENERLRAKVDELNRQVEVGSS) are a coiled coil. The segment at 69–90 (VEVGSSMSNQTASRQPVSSATN) is disordered. Over residues 71–90 (VGSSMSNQTASRQPVSSATN) the composition is skewed to polar residues.

It belongs to the GpsB family. As to quaternary structure, forms polymers through the coiled coil domains. Interacts with PBP1, MreC and EzrA.

The protein resides in the cytoplasm. Functionally, divisome component that associates with the complex late in its assembly, after the Z-ring is formed, and is dependent on DivIC and PBP2B for its recruitment to the divisome. Together with EzrA, is a key component of the system that regulates PBP1 localization during cell cycle progression. Its main role could be the removal of PBP1 from the cell pole after pole maturation is completed. Also contributes to the recruitment of PBP1 to the division complex. Not essential for septum formation. In Limosilactobacillus reuteri (strain DSM 20016) (Lactobacillus reuteri), this protein is Cell cycle protein GpsB.